The chain runs to 83 residues: Exodeoxyribonuclease 7 small subunit (83 aa).

Belongs to the XseB family. In terms of assembly, heterooligomer composed of large and small subunits.

It is found in the cytoplasm. It carries out the reaction Exonucleolytic cleavage in either 5'- to 3'- or 3'- to 5'-direction to yield nucleoside 5'-phosphates.. In terms of biological role, bidirectionally degrades single-stranded DNA into large acid-insoluble oligonucleotides, which are then degraded further into small acid-soluble oligonucleotides. This Allorhizobium ampelinum (strain ATCC BAA-846 / DSM 112012 / S4) (Agrobacterium vitis (strain S4)) protein is Exodeoxyribonuclease 7 small subunit.